A 407-amino-acid polypeptide reads, in one-letter code: Dephospho-CoA kinase (407 aa).

Residues 3–201 (RIGLTGGIGA…ERIVPFAHNL (199 aa)) enclose the DPCK domain. 11 to 16 (GAGKSA) is an ATP binding site. Residues 196–407 (PFAHNLSTRQ…DWADSTGWKP (212 aa)) form a UPF0157 region.

The protein in the N-terminal section; belongs to the CoaE family. This sequence in the C-terminal section; belongs to the UPF0157 (GrpB) family.

Its subcellular location is the cytoplasm. The enzyme catalyses 3'-dephospho-CoA + ATP = ADP + CoA + H(+). It participates in cofactor biosynthesis; coenzyme A biosynthesis; CoA from (R)-pantothenate: step 5/5. Its function is as follows. Catalyzes the phosphorylation of the 3'-hydroxyl group of dephosphocoenzyme A to form coenzyme A. The polypeptide is Dephospho-CoA kinase (Mycolicibacterium paratuberculosis (strain ATCC BAA-968 / K-10) (Mycobacterium paratuberculosis)).